We begin with the raw amino-acid sequence, 149 residues long: Transcriptional repressor NrdR (149 aa).

A zinc finger lies at 3 to 34 (CPFCTAKDTKVIDSRLVGGGHQVRRRRECNDC). An ATP-cone domain is found at 49–139 (PRVIKQDGSR…VYRSFEDIRE (91 aa)).

It belongs to the NrdR family. Requires Zn(2+) as cofactor.

In terms of biological role, negatively regulates transcription of bacterial ribonucleotide reductase nrd genes and operons by binding to NrdR-boxes. This is Transcriptional repressor NrdR from Pseudoalteromonas translucida (strain TAC 125).